The chain runs to 373 residues: Stationary phase protein 5 (373 aa).

Its function is as follows. Required for survival at high temperature during stationary phase. This is Stationary phase protein 5 (SPG5) from Saccharomyces cerevisiae (strain ATCC 204508 / S288c) (Baker's yeast).